Here is a 201-residue protein sequence, read N- to C-terminus: Dephospho-CoA kinase (201 aa).

The DPCK domain occupies 4 to 201 (AFFVTASIAC…VIQEISKGNM (198 aa)). 12-17 (ACGKST) is a binding site for ATP.

The protein belongs to the CoaE family.

The protein resides in the cytoplasm. It carries out the reaction 3'-dephospho-CoA + ATP = ADP + CoA + H(+). The protein operates within cofactor biosynthesis; coenzyme A biosynthesis; CoA from (R)-pantothenate: step 5/5. Its function is as follows. Catalyzes the phosphorylation of the 3'-hydroxyl group of dephosphocoenzyme A to form coenzyme A. This chain is Dephospho-CoA kinase, found in Campylobacter jejuni subsp. jejuni serotype O:2 (strain ATCC 700819 / NCTC 11168).